Reading from the N-terminus, the 434-residue chain is V-type ATP synthase beta chain (434 aa).

Belongs to the ATPase alpha/beta chains family.

Functionally, produces ATP from ADP in the presence of a proton gradient across the membrane. The V-type beta chain is a regulatory subunit. The polypeptide is V-type ATP synthase beta chain (atpB) (Borreliella burgdorferi (strain ATCC 35210 / DSM 4680 / CIP 102532 / B31) (Borrelia burgdorferi)).